The sequence spans 259 residues: Pimeloyl-[acyl-carrier protein] methyl ester esterase (259 aa).

Residues 16–241 (FVMLHGWGMN…QSAHVPFISH (226 aa)) enclose the AB hydrolase-1 domain. Residues tryptophan 22, 82–83 (SM), and 143–147 (FLLLQ) each bind substrate. Serine 82 serves as the catalytic Nucleophile. Catalysis depends on residues aspartate 207 and histidine 235. Histidine 235 serves as a coordination point for substrate.

It belongs to the AB hydrolase superfamily. Carboxylesterase BioH family. As to quaternary structure, monomer.

It is found in the cytoplasm. The catalysed reaction is 6-carboxyhexanoyl-[ACP] methyl ester + H2O = 6-carboxyhexanoyl-[ACP] + methanol + H(+). The protein operates within cofactor biosynthesis; biotin biosynthesis. Its function is as follows. The physiological role of BioH is to remove the methyl group introduced by BioC when the pimeloyl moiety is complete. It allows to synthesize pimeloyl-ACP via the fatty acid synthetic pathway through the hydrolysis of the ester bonds of pimeloyl-ACP esters. In Hamiltonella defensa subsp. Acyrthosiphon pisum (strain 5AT), this protein is Pimeloyl-[acyl-carrier protein] methyl ester esterase.